We begin with the raw amino-acid sequence, 374 residues long: Chaperone protein DnaJ (374 aa).

In terms of domain architecture, J spans 5 to 70 (CYYEILNVSK…SKRSRYDQFG (66 aa)). The CR-type zinc finger occupies 130–207 (GVEKEITIPR…CYGNGKVKKQ (78 aa)). Residues Cys-143, Cys-146, Cys-159, Cys-162, Cys-181, Cys-184, Cys-195, and Cys-198 each coordinate Zn(2+). CXXCXGXG motif repeat units follow at residues 143-150 (CDSCDGTG), 159-166 (CHACHGQG), 181-188 (CPVCNGTG), and 195-202 (CDACYGNG).

The protein belongs to the DnaJ family. As to quaternary structure, homodimer. It depends on Zn(2+) as a cofactor.

The protein resides in the cytoplasm. Its function is as follows. Participates actively in the response to hyperosmotic and heat shock by preventing the aggregation of stress-denatured proteins and by disaggregating proteins, also in an autonomous, DnaK-independent fashion. Unfolded proteins bind initially to DnaJ; upon interaction with the DnaJ-bound protein, DnaK hydrolyzes its bound ATP, resulting in the formation of a stable complex. GrpE releases ADP from DnaK; ATP binding to DnaK triggers the release of the substrate protein, thus completing the reaction cycle. Several rounds of ATP-dependent interactions between DnaJ, DnaK and GrpE are required for fully efficient folding. Also involved, together with DnaK and GrpE, in the DNA replication of plasmids through activation of initiation proteins. This is Chaperone protein DnaJ from Francisella tularensis subsp. tularensis (strain FSC 198).